Here is a 156-residue protein sequence, read N- to C-terminus: Putative pre-16S rRNA nuclease (156 aa).

The protein belongs to the YqgF nuclease family.

It is found in the cytoplasm. Could be a nuclease involved in processing of the 5'-end of pre-16S rRNA. This is Putative pre-16S rRNA nuclease from Streptomyces avermitilis (strain ATCC 31267 / DSM 46492 / JCM 5070 / NBRC 14893 / NCIMB 12804 / NRRL 8165 / MA-4680).